Here is a 311-residue protein sequence, read N- to C-terminus: tRNA dimethylallyltransferase (311 aa).

Residue Gly13–Thr20 participates in ATP binding. Thr15 to Thr20 contributes to the substrate binding site. Interaction with substrate tRNA regions lie at residues Asp38–Gln41 and Gln166–Arg170.

The protein belongs to the IPP transferase family. As to quaternary structure, monomer. Requires Mg(2+) as cofactor.

The enzyme catalyses adenosine(37) in tRNA + dimethylallyl diphosphate = N(6)-dimethylallyladenosine(37) in tRNA + diphosphate. Functionally, catalyzes the transfer of a dimethylallyl group onto the adenine at position 37 in tRNAs that read codons beginning with uridine, leading to the formation of N6-(dimethylallyl)adenosine (i(6)A). This chain is tRNA dimethylallyltransferase, found in Staphylococcus aureus (strain bovine RF122 / ET3-1).